We begin with the raw amino-acid sequence, 476 residues long: MGTTSSQSKTLYQKLYDAHIVHEAPNETPLLYIDRHLVHEVTSPQAFDGLRAMGRPVRQPGKTFATMDHNVSTQTKDINASGEMARIQMQELIKNCAEFGVSLYDLNHPFQGIVHVIGPEQGMTLPGMTIVCGDSHTATHGAFGSLAFGIGTSEVEHVLATQTLKQGRAKTMRIEVNGTVGAGITAKDIVLAIIGKTGSAGGTGHVVEFCGSAIEALSMEGRMTLCNMAIEMGAKAGLVAPDDTTFAYLKGRQFAPTGEQWEQGVAYWRTLKSDADAQFDTIVTLDAADIAPQVTWGTNPGQVIAVNQIIPAPESFSDPVERASAEKALAYMDLRPGIKLTEVAIDKVFIGSCTNSRIEDLRAAAAIAQGRKVAKGVQAIVVPGSGPVKAQAEAEGLDKIFIAAGFEWRLPGCSMCLAMNNDRLEPGERCASTSNRNFEGRQGRGGRTHLVSPAMAAAAAVSGHFADVRELSAATH.

3 residues coordinate [4Fe-4S] cluster: C353, C413, and C416.

The protein belongs to the aconitase/IPM isomerase family. LeuC type 1 subfamily. In terms of assembly, heterodimer of LeuC and LeuD. [4Fe-4S] cluster is required as a cofactor.

It catalyses the reaction (2R,3S)-3-isopropylmalate = (2S)-2-isopropylmalate. It participates in amino-acid biosynthesis; L-leucine biosynthesis; L-leucine from 3-methyl-2-oxobutanoate: step 2/4. Its function is as follows. Catalyzes the isomerization between 2-isopropylmalate and 3-isopropylmalate, via the formation of 2-isopropylmaleate. This chain is 3-isopropylmalate dehydratase large subunit, found in Yersinia pseudotuberculosis serotype IB (strain PB1/+).